The following is a 261-amino-acid chain: Cytochrome c oxidase subunit 3 (261 aa).

Residues 1 to 15 lie on the Mitochondrial matrix side of the membrane; sequence MTHQTHAYHMVNPSP. The chain crosses the membrane as a helical span at residues 16–34; the sequence is WPLTGALSALLMTSGLTMW. At 35–40 the chain is on the mitochondrial intermembrane side; the sequence is FHFNST. Residues 41-66 form a helical membrane-spanning segment; it reads ILLMLGLTTNMLTMYQWWRDIIREST. Over 67–72 the chain is Mitochondrial matrix; that stretch reads FQGHHT. A helical transmembrane segment spans residues 73–105; that stretch reads PVVQKGLRYGMILFIISEVLFFTGFFWAFYHSS. Topologically, residues 106–128 are mitochondrial intermembrane; the sequence is LAPTPELGGCWPPTGIHPLNPLE. Residues 129-152 traverse the membrane as a helical segment; sequence VPLLNTSVLLASGVSITWAHHSLM. Over 153–155 the chain is Mitochondrial matrix; it reads EGH. Residues 156–183 traverse the membrane as a helical segment; that stretch reads RNHMLQALFITIALGVYFTLLQASEYYE. The Mitochondrial intermembrane segment spans residues 184 to 190; the sequence is APFTISD. A helical membrane pass occupies residues 191–223; the sequence is GVYGSTFFVATGFHGLHVIIGSTFLIVCFFRQL. The Mitochondrial matrix segment spans residues 224 to 232; sequence KFHFTSSHH. Residues 233–256 traverse the membrane as a helical segment; that stretch reads FGFEAAAWYWHFVDVVWLFLYVSI. The Mitochondrial intermembrane portion of the chain corresponds to 257–261; that stretch reads YWWGS.

The protein belongs to the cytochrome c oxidase subunit 3 family. In terms of assembly, component of the cytochrome c oxidase (complex IV, CIV), a multisubunit enzyme composed of 14 subunits. The complex is composed of a catalytic core of 3 subunits MT-CO1, MT-CO2 and MT-CO3, encoded in the mitochondrial DNA, and 11 supernumerary subunits COX4I, COX5A, COX5B, COX6A, COX6B, COX6C, COX7A, COX7B, COX7C, COX8 and NDUFA4, which are encoded in the nuclear genome. The complex exists as a monomer or a dimer and forms supercomplexes (SCs) in the inner mitochondrial membrane with NADH-ubiquinone oxidoreductase (complex I, CI) and ubiquinol-cytochrome c oxidoreductase (cytochrome b-c1 complex, complex III, CIII), resulting in different assemblies (supercomplex SCI(1)III(2)IV(1) and megacomplex MCI(2)III(2)IV(2)).

The protein resides in the mitochondrion inner membrane. The catalysed reaction is 4 Fe(II)-[cytochrome c] + O2 + 8 H(+)(in) = 4 Fe(III)-[cytochrome c] + 2 H2O + 4 H(+)(out). Component of the cytochrome c oxidase, the last enzyme in the mitochondrial electron transport chain which drives oxidative phosphorylation. The respiratory chain contains 3 multisubunit complexes succinate dehydrogenase (complex II, CII), ubiquinol-cytochrome c oxidoreductase (cytochrome b-c1 complex, complex III, CIII) and cytochrome c oxidase (complex IV, CIV), that cooperate to transfer electrons derived from NADH and succinate to molecular oxygen, creating an electrochemical gradient over the inner membrane that drives transmembrane transport and the ATP synthase. Cytochrome c oxidase is the component of the respiratory chain that catalyzes the reduction of oxygen to water. Electrons originating from reduced cytochrome c in the intermembrane space (IMS) are transferred via the dinuclear copper A center (CU(A)) of subunit 2 and heme A of subunit 1 to the active site in subunit 1, a binuclear center (BNC) formed by heme A3 and copper B (CU(B)). The BNC reduces molecular oxygen to 2 water molecules using 4 electrons from cytochrome c in the IMS and 4 protons from the mitochondrial matrix. The protein is Cytochrome c oxidase subunit 3 (MT-CO3) of Tragelaphus strepsiceros (Greater kudu).